An 883-amino-acid polypeptide reads, in one-letter code: 3-hydroxy-3-methylglutaryl-coenzyme A reductase (883 aa).

At 1–9 (MLSRLFRMH) the chain is on the cytoplasmic side. The chain crosses the membrane as a helical span at residues 10-39 (GQFVASHPWEVIVGTVTLTICMMSMNMFTG). Residues 40–56 (NDKICGWNYACPKFEED) are Lumenal-facing. The helical transmembrane segment at 57-78 (VLSSDIIILTITRCIAILYIYF) threads the bilayer. The Cytoplasmic segment spans residues 79–89 (QFQNLRQLGSK). The chain crosses the membrane as a helical span at residues 90-114 (YILGIAGLFTIFSSFVFSTVVIHFL). Topologically, residues 115-123 (DKELTGLNE) are lumenal. The chain crosses the membrane as a helical span at residues 124–149 (ALPFFLLLIDLSKASALAKFALSSNS). The Cytoplasmic portion of the chain corresponds to 150-159 (QDEVRDNIAR). A helical membrane pass occupies residues 160-187 (GMAILGPTFTLEALVECLVIGVGTMSGV). Topologically, residues 188–191 (RQLE) are lumenal. The chain crosses the membrane as a helical span at residues 192 to 220 (IMCCFGCMSVLANYFAFMTFFPACVSLVL). Topologically, residues 221-249 (ELSRESREGRPIWQLSQFASVLEEEEDNK) are cytoplasmic. A helical transmembrane segment spans residues 250 to 276 (PNPVTQRVKMIMSLGLVLVHAHSRWIS). Topologically, residues 277–316 (EPSSQNSTSISDHEVTTMLDDMMPKRVEPSMPLWQFYLSR) are lumenal. Asn-282 carries an N-linked (GlcNAc...) asparagine glycan. The chain crosses the membrane as a helical span at residues 317–341 (MVTMDVEQIITLGLALLLAVKYIFF). The Cytoplasmic segment spans residues 342 to 883 (EQTETESTFS…LPGTCTKKAA (542 aa)). Positions 373 to 396 (REPEQEKTVHVSTTEEASSKEETE) are disordered. Residues Glu-554, Lys-686, and Asp-762 each act as charge relay system in the active site. The active-site Proton donor is the His-861.

It belongs to the HMG-CoA reductase family. As to quaternary structure, homotetramer. Homodimer.

Its subcellular location is the endoplasmic reticulum membrane. The protein resides in the peroxisome membrane. The catalysed reaction is (R)-mevalonate + 2 NADP(+) + CoA = (3S)-3-hydroxy-3-methylglutaryl-CoA + 2 NADPH + 2 H(+). Its pathway is metabolic intermediate biosynthesis; (R)-mevalonate biosynthesis; (R)-mevalonate from acetyl-CoA: step 3/3. In terms of biological role, catalyzes the conversion of (3S)-hydroxy-3-methylglutaryl-CoA (HMG-CoA) to mevalonic acid, the rate-limiting step in the synthesis of cholesterol and other isoprenoids, thus plays a critical role in cellular cholesterol homeostasis. The sequence is that of 3-hydroxy-3-methylglutaryl-coenzyme A reductase (hmgcr) from Xenopus laevis (African clawed frog).